The primary structure comprises 652 residues: Acetyl-coenzyme A synthetase (652 aa).

CoA-binding positions include 191 to 194, threonine 311, and asparagine 335; that span reads RAGR. ATP-binding positions include 387-389, 411-416, aspartate 500, and arginine 515; these read GEP and DTWWQT. Serine 523 lines the CoA pocket. Arginine 526 is a binding site for ATP. Valine 537, histidine 539, and isoleucine 542 together coordinate Mg(2+). Arginine 584 provides a ligand contact to CoA. Position 609 is an N6-acetyllysine (lysine 609).

This sequence belongs to the ATP-dependent AMP-binding enzyme family. Mg(2+) serves as cofactor. Post-translationally, acetylated. Deacetylation by the SIR2-homolog deacetylase activates the enzyme.

It catalyses the reaction acetate + ATP + CoA = acetyl-CoA + AMP + diphosphate. Functionally, catalyzes the conversion of acetate into acetyl-CoA (AcCoA), an essential intermediate at the junction of anabolic and catabolic pathways. Acs undergoes a two-step reaction. In the first half reaction, Acs combines acetate with ATP to form acetyl-adenylate (AcAMP) intermediate. In the second half reaction, it can then transfer the acetyl group from AcAMP to the sulfhydryl group of CoA, forming the product AcCoA. In terms of biological role, enables the cell to use acetate during aerobic growth to generate energy via the TCA cycle, and biosynthetic compounds via the glyoxylate shunt. Acetylates CheY, the response regulator involved in flagellar movement and chemotaxis. In Sodalis glossinidius (strain morsitans), this protein is Acetyl-coenzyme A synthetase.